Reading from the N-terminus, the 128-residue chain is Cionin (128 aa).

An N-terminal signal peptide occupies residues 1-22 (MGSNIVIYFSIIVIVTLNVNGV). Positions 23–108 (PASDLFKSVS…NQGHMQRMDR (86 aa)) are excised as a propeptide. Sulfotyrosine occurs at positions 110 and 111. Phe116 bears the Phenylalanine amide mark. A propeptide spanning residues 120–128 (AIEDVDYEY) is cleaved from the precursor.

The protein belongs to the gastrin/cholecystokinin family. Expressed in both the gut and the neural ganglion.

It is found in the secreted. The polypeptide is Cionin (Ciona intestinalis (Transparent sea squirt)).